Consider the following 339-residue polypeptide: ATPase GET3 (339 aa).

An ATP-binding site is contributed by 37–44 (KGGVGKTT). The active site involves D66. E237 and N264 together coordinate ATP. Residues C275 and C278 each coordinate Zn(2+).

This sequence belongs to the arsA ATPase family. As to quaternary structure, homodimer.

It is found in the cytoplasm. It localises to the endoplasmic reticulum. In terms of biological role, ATPase required for the post-translational delivery of tail-anchored (TA) proteins to the endoplasmic reticulum. Recognizes and selectively binds the transmembrane domain of TA proteins in the cytosol. This complex then targets to the endoplasmic reticulum by membrane-bound receptors, where the tail-anchored protein is released for insertion. This process is regulated by ATP binding and hydrolysis. ATP binding drives the homodimer towards the closed dimer state, facilitating recognition of newly synthesized TA membrane proteins. ATP hydrolysis is required for insertion. Subsequently, the homodimer reverts towards the open dimer state, lowering its affinity for the membrane-bound receptor, and returning it to the cytosol to initiate a new round of targeting. The protein is ATPase GET3 of Rhodotorula glutinis (Yeast).